A 510-amino-acid chain; its full sequence is Putative glycerol-3-phosphate transporter 3 (510 aa).

Transmembrane regions (helical) follow at residues 31–51 (LSFK…YIAF), 91–111 (ALLG…MFVA), 123–143 (FLTI…VAFW), 158–178 (LAGW…GNWF), 185–205 (VIMG…TLIA), 217–237 (FVGP…FLPV), 279–299 (VGFL…CLFF), 331–351 (GNLS…AGYF), 355–375 (LDGR…ALFL), 378–398 (IYGH…GLFV), 436–456 (TGSV…AISW), and 459–479 (VFYM…TLII).

It belongs to the major facilitator superfamily. Organophosphate:Pi antiporter (OPA) (TC 2.A.1.4) family.

The protein resides in the membrane. The polypeptide is Putative glycerol-3-phosphate transporter 3 (Arabidopsis thaliana (Mouse-ear cress)).